The sequence spans 273 residues: Type IV secretion system protein PtlF homolog (273 aa).

The N-terminal stretch at 1 to 20 (MMAARMMAAGLAATALSAHA) is a signal peptide.

It belongs to the TrbG/VirB9 family.

It is found in the cell outer membrane. The sequence is that of Type IV secretion system protein PtlF homolog (ptlF) from Bordetella bronchiseptica (strain ATCC BAA-588 / NCTC 13252 / RB50) (Alcaligenes bronchisepticus).